We begin with the raw amino-acid sequence, 403 residues long: Tyrosine--tRNA ligase (403 aa).

The short motif at 45–54 (PTAPDLHLGH) is the 'HIGH' region element. Positions 229-233 (KMSKS) match the 'KMSKS' region motif. K232 is an ATP binding site. In terms of domain architecture, S4 RNA-binding spans 341 to 402 (VLLGRLLAEA…GKRRFARIVF (62 aa)).

It belongs to the class-I aminoacyl-tRNA synthetase family. TyrS type 2 subfamily. In terms of assembly, homodimer.

Its subcellular location is the cytoplasm. It carries out the reaction tRNA(Tyr) + L-tyrosine + ATP = L-tyrosyl-tRNA(Tyr) + AMP + diphosphate + H(+). In terms of biological role, catalyzes the attachment of tyrosine to tRNA(Tyr) in a two-step reaction: tyrosine is first activated by ATP to form Tyr-AMP and then transferred to the acceptor end of tRNA(Tyr). This chain is Tyrosine--tRNA ligase, found in Geobacter metallireducens (strain ATCC 53774 / DSM 7210 / GS-15).